A 595-amino-acid polypeptide reads, in one-letter code: Aspartate--tRNA(Asp/Asn) ligase (595 aa).

Glutamate 174 contacts L-aspartate. The segment at 198–201 (QLFK) is aspartate. Arginine 220 contacts L-aspartate. ATP is bound by residues 220–222 (RDE) and glutamine 229. Histidine 456 provides a ligand contact to L-aspartate. Glutamate 486 provides a ligand contact to ATP. Arginine 493 is an L-aspartate binding site. 538 to 541 (GFDR) contributes to the ATP binding site.

It belongs to the class-II aminoacyl-tRNA synthetase family. Type 1 subfamily. In terms of assembly, homodimer.

It is found in the cytoplasm. The enzyme catalyses tRNA(Asx) + L-aspartate + ATP = L-aspartyl-tRNA(Asx) + AMP + diphosphate. Functionally, aspartyl-tRNA synthetase with relaxed tRNA specificity since it is able to aspartylate not only its cognate tRNA(Asp) but also tRNA(Asn). Reaction proceeds in two steps: L-aspartate is first activated by ATP to form Asp-AMP and then transferred to the acceptor end of tRNA(Asp/Asn). This chain is Aspartate--tRNA(Asp/Asn) ligase, found in Gloeobacter violaceus (strain ATCC 29082 / PCC 7421).